Consider the following 212-residue polypeptide: Transmembrane emp24 domain-containing protein p24delta7 (212 aa).

Positions 1–22 (MNHRRSSIVLLILSILSPVTLS) are cleaved as a signal peptide. Residues 23–179 (IRYELLSGHT…HNLNIATNSK (157 aa)) lie on the Lumenal side of the membrane. A GOLD domain is found at 32–147 (TKCISEEIHA…VETMEFEVKK (116 aa)). Residues 162-175 (LRDREEEMHNLNIA) adopt a coiled-coil conformation. An Omega-N-methylated arginine modification is found at Arg-165. A helical transmembrane segment spans residues 180-200 (MAWLSFVSLAVCLSVAGLQFW). The Cytoplasmic portion of the chain corresponds to 201–212 (HLKTFFQKKKLI). Positions 205 to 206 (FF) match the COPII vesicle coat-binding motif. A COPI vesicle coat-binding motif is present at residues 205–212 (FFQKKKLI).

Belongs to the EMP24/GP25L family. In terms of assembly, probably oligomerizes with other members of the EMP24/GP25L family. Associates with the COPI vesicle coat (coatomer). Associates with the COPII vesicle coat (coatomer).

Its subcellular location is the endoplasmic reticulum membrane. It is found in the golgi apparatus. The protein resides in the cis-Golgi network membrane. The protein localises to the golgi stack membrane. Involved in vesicular protein trafficking. Mainly functions in the early secretory pathway. Thought to act as cargo receptor at the lumenal side for incorporation of secretory cargo molecules into transport vesicles and to be involved in vesicle coat formation at the cytoplasmic side. The sequence is that of Transmembrane emp24 domain-containing protein p24delta7 from Arabidopsis thaliana (Mouse-ear cress).